The primary structure comprises 385 residues: MTVVPVTSADLDAAEVSWFSALCSDDYAYLGVPDGSLRSSFEHCSDIVKKAEELGFRNILCPSSYQVGQDTLSFVAGCAPISDRINFLAAIRCGEMQPIMLARTVATLDHMLKGRLTLNVISSDFPGEVADSAFRYKRSHEVVEILRQAWTRDTIDHDGEIYQFKGVSTEPARPYQLNGGPLLYFGGYSPDALELCGAQCDVYLMWPETKDQLADRMRAAHERAAAHGRTLDYGLRVHMVVRDTEQEAREYADHLVSKLDDEYGQLIRNRAHDSGSLGVSHQARARELADKFGYVEPNLWTGIGRARSGCGAALVGSTDQVLSALEEYQKMGIRAFILSGYPHLDEAEHFGTKVLPQMKTCSLPHAYGRVPSETPATPLGNGERH.

Residues 366-385 (AYGRVPSETPATPLGNGERH) form a disordered region.

The protein belongs to the SsuD family. In terms of assembly, homodimer.

It catalyses the reaction 6-sulfo-D-quinovose + FMNH2 + O2 = 6-dehydro-D-glucose + FMN + sulfite + H2O + 2 H(+). In terms of biological role, part of the sulfoquinovose monooxygenase (sulfo-SMO) pathway, a D-sulfoquinovose degradation pathway that enables the complete utilization of all carbons within sulfoquinovose (SQ) with concomitant production of inorganic sulfite. Catalyzes the oxidative desulfurization of sulfoquinovose to sulfite and 6-dehydro-D-glucose. Is highly specific for sulfoquinovose and cannot use sulfoquinovosyl glycerol. FMNH(2) is provided by the FMN reductase SmoA. The polypeptide is Sulfoquinovose monooxygenase (Agrobacterium fabrum (strain C58 / ATCC 33970) (Agrobacterium tumefaciens (strain C58))).